The sequence spans 904 residues: Dynamin-like protein C (904 aa).

Positions 44–102 form a coiled coil; sequence IAEAMALKMHEEEKKKREEKKRKRDNEELLSKQVRTKLENERKKLDDSESINASTNQEL. Residues 53 to 93 are disordered; the sequence is HEEEKKKREEKKRKRDNEELLSKQVRTKLENERKKLDDSES. Over residues 67–90 the composition is skewed to basic and acidic residues; sequence RDNEELLSKQVRTKLENERKKLDD. The Dynamin-type G domain occupies 119–441; it reads SFDTPELVVV…HEKYQQNLLP (323 aa). The tract at residues 129 to 136 is G1 motif; it reads GMQSDGKS. Residue 129-136 coordinates GTP; that stretch reads GMQSDGKS. Residues 155–157 form a G2 motif region; it reads GTR. Positions 169–227 are disordered; the sequence is SKQQPSCRFKKEDYSNSYGGSSSSTSTTSGNSNHNTDKQQNVSSSQGGGGGSNNLNEDK. The segment covering 183–213 has biased composition (low complexity); that stretch reads SNSYGGSSSSTSTTSGNSNHNTDKQQNVSSS. Residues 278–281 form a G3 motif region; the sequence is DTPG. Residues 278 to 282 and 343 to 346 each bind GTP; these read DTPGF and TKFD. The segment at 343 to 346 is G4 motif; it reads TKFD. Residues 378-381 form a G5 motif region; that stretch reads LPLK. Residues 781-811 adopt a coiled-coil conformation; the sequence is EMFQLGLKELENKLHKLEFQLIDCKKNRDKF. Disordered stretches follow at residues 821-840 and 853-904; these read SLNQ…ASSS and NGKF…FDQN. Residues 853-876 show a composition bias toward polar residues; it reads NGKFSTPDKNSLTMSPFTSPFTQS. The span at 877 to 891 shows a compositional bias: low complexity; sequence NYHQHNNNNYQINQQ.

It belongs to the TRAFAC class dynamin-like GTPase superfamily. Dynamin/Fzo/YdjA family.

Its subcellular location is the cytoplasm. The catalysed reaction is GTP + H2O = GDP + phosphate + H(+). Involved in cytokinesis. May hydrolyze GTP. In Dictyostelium discoideum (Social amoeba), this protein is Dynamin-like protein C (dlpC).